A 479-amino-acid chain; its full sequence is Calcium-dependent mitochondrial ATP-magnesium/phosphate carrier protein 3 (479 aa).

The Mitochondrial intermembrane portion of the chain corresponds to 1-208 (MESSKPKNRN…ISKHVKRSRL (208 aa)). EF-hand domains lie at 33-68 (EREI…LQIP), 69-104 (PEYK…KELE), 105-135 (LYRI…AGIE), and 136-171 (IDDE…YPHE). 5 residues coordinate Ca(2+): D82, N84, D86, R88, and E93. Ca(2+) contacts are provided by D149, D151, N153, T155, and E160. Solcar repeat units lie at residues 203–286 (VKRS…LKPM), 294–381 (IGTS…LKDL), and 392–475 (PGPL…MKKN). Residues 209–226 (LLAGGLAGAVSRTATAPL) traverse the membrane as a helical segment. The Mitochondrial matrix portion of the chain corresponds to 227–260 (DRLKVVLQVQRAHAGVLPTIKKIWREDKLMGFFR). Residues 261–280 (GNGLNVMKVAPESAIKFCAY) traverse the membrane as a helical segment. Over 281-303 (EMLKPMIGGEDGDIGTSGRLMAG) the chain is Mitochondrial intermembrane. Residues 304 to 317 (GMAGALAQTAIYPM) traverse the membrane as a helical segment. The Mitochondrial matrix portion of the chain corresponds to 318 to 355 (DLVKTRLQTCVSEGGKAPKLWKLTKDIWVREGPRAFYK). Residues 356-375 (GLFPSLLGIVPYAGIDLAAY) form a helical membrane-spanning segment. The Mitochondrial intermembrane segment spans residues 376–397 (ETLKDLSRTYILQDTEPGPLIQ). A helical transmembrane segment spans residues 398 to 415 (LSCGMTSGALGASCVYPL). Topologically, residues 416-449 (QVVRTRMQADSSKTTMKQEFMNTMKGEGLRGFYR) are mitochondrial matrix. The helical transmembrane segment at 450-469 (GLLPNLLKVVPAASITYIVY) threads the bilayer. The Mitochondrial intermembrane segment spans residues 470–479 (EAMKKNMALD).

It belongs to the mitochondrial carrier (TC 2.A.29) family. As to expression, expressed in flowers, leaves, stems, roots and seedlings, mostly in seedlings.

Its subcellular location is the mitochondrion inner membrane. Its activity is regulated as follows. Counter-exchange transport activity is saturable and inhibited by pyridoxal-5'-phosphate, EDTA and EGTA. Activated by calcium Ca(2+) and manganese Mn(2+) ions, and slightly by iron Fe(2+) and zinc Zn(2+) ions. Repressed by copper ions Cu(2+) and slightly by magnesium Mg(2+) ions. Magnesium Mg(2+) ions promotes slightly ATP uptake, ATP-Mg(2+) being exchanged with ATP(4-). Functionally, calcium-dependent mitochondrial carrier protein that catalyzes the import of ATP co-transported with metal divalent cations across the mitochondrial inner membrane in exchange for phosphate (Pi). Can transport phosphate, AMP, ADP, ATP, adenosine 5'-phosphosulfate, sulfate and thiosulfate, and, to a lesser extent, other nucleotides. Binds calcium ions Ca(2+). Also mediates calcium uptake. The polypeptide is Calcium-dependent mitochondrial ATP-magnesium/phosphate carrier protein 3 (Arabidopsis thaliana (Mouse-ear cress)).